Here is a 1657-residue protein sequence, read N- to C-terminus: Putative serine/threonine-protein kinase/receptor R826 (1657 aa).

The signal sequence occupies residues 1-23 (MRLNSQIVFCIVVVISCLSMIEC). N-linked (GlcNAc...) asparagine; by host glycosylation is found at Asn153, Asn178, Asn238, Asn255, Asn352, Asn454, Asn476, Asn494, and Asn596. Residues 742–762 (IILAVVIPIAFIIVCIICILV) traverse the membrane as a helical segment. One can recognise a Protein kinase 1 domain in the interval 786 to 1049 (LELGEQLGTG…EIMTRLSNLM (264 aa)). Residues 792–800 (LGTGAFGEV) and Lys813 contribute to the ATP site. Residue Asp909 is the Proton acceptor of the active site. Residues 1089-1115 (VQNSYNRTDSYDLGSNNSHSSITSDTN) are disordered. The Guanylate cyclase domain occupies 1134-1277 (VVVFTDIISA…PTVTTAAAVT (144 aa)). A Protein kinase 2 domain is found at 1399 to 1651 (IKMGEQIGLG…DDVIIVLAKF (253 aa)). Residues 1405-1413 (IGLGSYGVV) and Lys1426 each bind ATP. Residue Asp1522 is the Proton acceptor of the active site.

It localises to the membrane. It catalyses the reaction L-seryl-[protein] + ATP = O-phospho-L-seryl-[protein] + ADP + H(+). The enzyme catalyses L-threonyl-[protein] + ATP = O-phospho-L-threonyl-[protein] + ADP + H(+). In Acanthamoeba polyphaga mimivirus (APMV), this protein is Putative serine/threonine-protein kinase/receptor R826.